The primary structure comprises 134 residues: Endoribonuclease YbeY (134 aa).

The Zn(2+) site is built by His94, His98, and His104.

The protein belongs to the endoribonuclease YbeY family. Requires Zn(2+) as cofactor.

The protein localises to the cytoplasm. Single strand-specific metallo-endoribonuclease involved in late-stage 70S ribosome quality control and in maturation of the 3' terminus of the 16S rRNA. In Campylobacter jejuni subsp. jejuni serotype O:23/36 (strain 81-176), this protein is Endoribonuclease YbeY.